The sequence spans 473 residues: Levansucrase (473 aa).

An N-terminal signal peptide occupies residues 1–29 (MNIKKFAKQATVLTFTTALLAGGATQAFA). 3 residues coordinate sucrose: Trp-85, Asp-86, and Ser-164. Asp-86 acts as the Nucleophile in catalysis. A Ca(2+)-binding site is contributed by Asp-241. Positions 246 and 247 each coordinate sucrose. Positions 272, 308, 310, and 339 each coordinate Ca(2+). Glu-340 lines the sucrose pocket. Glu-342 acts as the Proton donor/acceptor in catalysis. Arg-360 serves as a coordination point for sucrose.

The protein belongs to the glycosyl hydrolase 68 family. Monomer.

The protein localises to the secreted. The catalysed reaction is [6)-beta-D-fructofuranosyl-(2-&gt;](n) alpha-D-glucopyranoside + sucrose = [6)-beta-D-fructofuranosyl-(2-&gt;](n+1) alpha-D-glucopyranoside + D-glucose. Its activity is regulated as follows. Ca(2+) may play an important structural role and promote stability of levansucrase. The enzyme concentration is a factor defining the molecular weight (MW) levan distribution. A bimodal distribution is reported at the usual enzyme concentrations. At low concentrations, the enzyme synthesizes high MW levan, and at high concentrations, it synthesizes low MW levan. Its function is as follows. Catalyzes the synthesis of levan, a fructose polymer, by transferring the fructosyl moiety from sucrose to a growing acceptor molecule. Also displays sucrose hydrolase activity. At low sucrose concentrations, functions as an hydrolase with water as acceptor, whereas at higher substrate concentrations it adds fructosyl units to a growing levan chain. The chain is Levansucrase from Bacillus subtilis (strain 168).